The chain runs to 1182 residues: DNA-directed RNA polymerase subunit beta (1182 aa).

The protein belongs to the RNA polymerase beta chain family. In terms of assembly, the RNAP catalytic core consists of 2 alpha, 1 beta, 1 beta' and 1 omega subunit. When a sigma factor is associated with the core the holoenzyme is formed, which can initiate transcription.

It catalyses the reaction RNA(n) + a ribonucleoside 5'-triphosphate = RNA(n+1) + diphosphate. Functionally, DNA-dependent RNA polymerase catalyzes the transcription of DNA into RNA using the four ribonucleoside triphosphates as substrates. The chain is DNA-directed RNA polymerase subunit beta from Fervidobacterium nodosum (strain ATCC 35602 / DSM 5306 / Rt17-B1).